Reading from the N-terminus, the 276-residue chain is Light-independent protochlorophyllide reductase iron-sulfur ATP-binding protein (276 aa).

ATP-binding positions include 12–17 and lysine 41; that span reads GIGKST. Serine 16 provides a ligand contact to Mg(2+). [4Fe-4S] cluster is bound by residues cysteine 97 and cysteine 131. 182-183 contacts ATP; it reads NR.

It belongs to the NifH/BchL/ChlL family. As to quaternary structure, homodimer. Protochlorophyllide reductase is composed of three subunits; BchL, BchN and BchB. It depends on [4Fe-4S] cluster as a cofactor.

It carries out the reaction chlorophyllide a + oxidized 2[4Fe-4S]-[ferredoxin] + 2 ADP + 2 phosphate = protochlorophyllide a + reduced 2[4Fe-4S]-[ferredoxin] + 2 ATP + 2 H2O. The protein operates within porphyrin-containing compound metabolism; bacteriochlorophyll biosynthesis (light-independent). Its function is as follows. Component of the dark-operative protochlorophyllide reductase (DPOR) that uses Mg-ATP and reduced ferredoxin to reduce ring D of protochlorophyllide (Pchlide) to form chlorophyllide a (Chlide). This reaction is light-independent. The L component serves as a unique electron donor to the NB-component of the complex, and binds Mg-ATP. The protein is Light-independent protochlorophyllide reductase iron-sulfur ATP-binding protein of Chlorobium luteolum (strain DSM 273 / BCRC 81028 / 2530) (Pelodictyon luteolum).